The following is a 362-amino-acid chain: 4-hydroxythreonine-4-phosphate dehydrogenase (362 aa).

Thr149 is a binding site for substrate. A divalent metal cation is bound by residues His184, His229, and His295. Residues Lys303, Asn312, and Arg321 each coordinate substrate.

It belongs to the PdxA family. In terms of assembly, homodimer. Requires a divalent metal cation as cofactor.

It is found in the cytoplasm. It catalyses the reaction 4-(phosphooxy)-L-threonine + NAD(+) = 3-amino-2-oxopropyl phosphate + CO2 + NADH. It functions in the pathway cofactor biosynthesis; pyridoxine 5'-phosphate biosynthesis; pyridoxine 5'-phosphate from D-erythrose 4-phosphate: step 4/5. Functionally, catalyzes the NAD(P)-dependent oxidation of 4-(phosphooxy)-L-threonine (HTP) into 2-amino-3-oxo-4-(phosphooxy)butyric acid which spontaneously decarboxylates to form 3-amino-2-oxopropyl phosphate (AHAP). The chain is 4-hydroxythreonine-4-phosphate dehydrogenase from Nostoc sp. (strain PCC 7120 / SAG 25.82 / UTEX 2576).